Consider the following 63-residue polypeptide: Large ribosomal subunit protein bL35 (63 aa).

Belongs to the bacterial ribosomal protein bL35 family.

This is Large ribosomal subunit protein bL35 from Finegoldia magna (strain ATCC 29328 / DSM 20472 / WAL 2508) (Peptostreptococcus magnus).